The primary structure comprises 274 residues: Phloretin hydrolase (274 aa).

Positions 123, 154, 251, and 255 each coordinate Zn(2+).

This sequence belongs to the DAPG/phloretin hydrolase family. In terms of assembly, homodimer. Zn(2+) is required as a cofactor.

The protein localises to the cytoplasm. The enzyme catalyses phloretin + H2O = phloretate + 1,3,5-trihydroxybenzene + H(+). Functionally, catalyzes the hydrolytic C-C cleavage of phloretin to phloroglucinol and 3-(4-hydroxyphenyl)propionic acid during flavonoid degradation. Also hydrolyzes other C-acylated phenols. This Eubacterium ramulus protein is Phloretin hydrolase (phy).